The chain runs to 200 residues: Transcription elongation factor A protein-like 3 (200 aa).

Positions 1 to 19 (MEEVRGENEGKLEKEGKPE) are enriched in basic and acidic residues. The disordered stretch occupies residues 1–200 (MEEVRGENEG…QRGLHDIPYL (200 aa)). A compositionally biased stretch (acidic residues) spans 20-34 (DEVEPEDEEKSDEDE). Residue Ser-30 is modified to Phosphoserine. 3 stretches are compositionally biased toward basic and acidic residues: residues 47 to 85 (GKPE…KPDS), 94 to 106 (RAAE…DYVP), and 114 to 153 (DRGT…EELR).

Belongs to the TFS-II family. TFA subfamily.

It localises to the nucleus. Functionally, may be involved in transcriptional regulation. The sequence is that of Transcription elongation factor A protein-like 3 (Tceal3) from Mus musculus (Mouse).